The following is a 221-amino-acid chain: MTDNKNRPAAGILGTKLGMTQVFDEKNRVVPVTVIKAGPNVVTQIRTEERDGYSAVQVAFGAIDPRKVNKPVAGQFAKAGVTPRRHIAEIRVADASSFEVGQEINADVFEEGSYVDVTGTSKGKGYAGTMKRHGFRGQGASHGAQAVHRRPGSIGGCATPGRVFKGMRMAGRMGNDRVTTQNLSVHKVDAENGLLLIKGAIPGRKGGVVIVKSAVKGGAHA.

Belongs to the universal ribosomal protein uL3 family. As to quaternary structure, part of the 50S ribosomal subunit. Forms a cluster with proteins L14 and L19.

One of the primary rRNA binding proteins, it binds directly near the 3'-end of the 23S rRNA, where it nucleates assembly of the 50S subunit. This is Large ribosomal subunit protein uL3 from Nocardia farcinica (strain IFM 10152).